A 269-amino-acid chain; its full sequence is 4-hydroxy-tetrahydrodipicolinate reductase (269 aa).

11 to 16 (GPIGRM) contributes to the NAD(+) binding site. Position 39 (K39) interacts with NADP(+). NAD(+) contacts are provided by residues 101-103 (GTT) and 125-128 (ASNF). The active-site Proton donor/acceptor is H158. (S)-2,3,4,5-tetrahydrodipicolinate is bound at residue H159. The active-site Proton donor is K162. A (S)-2,3,4,5-tetrahydrodipicolinate-binding site is contributed by 168 to 169 (GT).

This sequence belongs to the DapB family. In terms of assembly, homotetramer.

Its subcellular location is the cytoplasm. It catalyses the reaction (S)-2,3,4,5-tetrahydrodipicolinate + NAD(+) + H2O = (2S,4S)-4-hydroxy-2,3,4,5-tetrahydrodipicolinate + NADH + H(+). The catalysed reaction is (S)-2,3,4,5-tetrahydrodipicolinate + NADP(+) + H2O = (2S,4S)-4-hydroxy-2,3,4,5-tetrahydrodipicolinate + NADPH + H(+). It participates in amino-acid biosynthesis; L-lysine biosynthesis via DAP pathway; (S)-tetrahydrodipicolinate from L-aspartate: step 4/4. Functionally, catalyzes the conversion of 4-hydroxy-tetrahydrodipicolinate (HTPA) to tetrahydrodipicolinate. The sequence is that of 4-hydroxy-tetrahydrodipicolinate reductase from Buchnera aphidicola subsp. Acyrthosiphon pisum (strain 5A).